The primary structure comprises 131 residues: Small ribosomal subunit protein uS8 (131 aa).

It belongs to the universal ribosomal protein uS8 family. As to quaternary structure, part of the 30S ribosomal subunit. Contacts proteins S5 and S12.

Its function is as follows. One of the primary rRNA binding proteins, it binds directly to 16S rRNA central domain where it helps coordinate assembly of the platform of the 30S subunit. In Campylobacter lari (strain RM2100 / D67 / ATCC BAA-1060), this protein is Small ribosomal subunit protein uS8.